A 345-amino-acid chain; its full sequence is N-acetyl-gamma-glutamyl-phosphate reductase (345 aa).

Cys149 is a catalytic residue.

This sequence belongs to the NAGSA dehydrogenase family. Type 1 subfamily.

Its subcellular location is the cytoplasm. The enzyme catalyses N-acetyl-L-glutamate 5-semialdehyde + phosphate + NADP(+) = N-acetyl-L-glutamyl 5-phosphate + NADPH + H(+). Its pathway is amino-acid biosynthesis; L-arginine biosynthesis; N(2)-acetyl-L-ornithine from L-glutamate: step 3/4. Its function is as follows. Catalyzes the NADPH-dependent reduction of N-acetyl-5-glutamyl phosphate to yield N-acetyl-L-glutamate 5-semialdehyde. The chain is N-acetyl-gamma-glutamyl-phosphate reductase from Bacillus cytotoxicus (strain DSM 22905 / CIP 110041 / 391-98 / NVH 391-98).